We begin with the raw amino-acid sequence, 838 residues long: MTDTTLPPDDSLDRIEPVDIQQEMQRSYIDYAMSVIVGRALPEVRDGLKPVHRRVLYAMFDSGFRPDRSHAKSARSVAETMGNYHPHGDASIYDTLVRMAQPWSLRYPLVDGQGNFGSPGNDPPAAMRYTEARLTPLAMEMLREIDEETVDFIPNYDGRVQEPTVLPSRFPNLLANGSGGIAVGMATNIPPHNLRELADAVFWALENHDADEEETLAAVMGRVKGPDFPTAGLIVGSQGTADAYKTGRGSIRMRGVVEVEEDSRGRTSLVITELPYQVNHDNFITSIAEQVRDGKLAGISNIEDQSSDRVGLRIVIEIKRDAVAKVVINNLYKHTQLQTSFGANMLAIVDGVPRTLRLDQLIRYYVDHQLDVIVRRTTYRLRKANERAHILRGLVKALDALDEVIALIRASETVDIARAGLIELLDIDEIQAQAILDMQLRRLAALERQRIIDDLAKIEAEIADLEDILAKPERQRGIVRDELAEIVDRHGDDRRTRIIAADGDVSDEDLIAREDVVVTITETGYAKRTKTDLYRSQKRGGKGVQGAGLKQDDIVAHFFVCSTHDLILFFTTQGRVYRAKAYDLPEASRTARGQHVANLLAFQPEERIAQVIQIRGYTDAPYLVLATRNGLVKKSKLTDFDSNRSGGIVAVNLRDNDELVGAVLCSADDDLLLVSANGQSIRFSATDEALRPMGRATSGVQGMRFNIDDRLLSLNVVREGTYLLVATSGGYAKRTAIEEYPVQGRGGKGVLTVMYDRRRGRLVGALIVDDDSELYAVTSGGGVIRTAARQVRKAGRQTKGVRLMNLGEGDTLLAIARNAEESGDDNAVDANGADQTGN.

In terms of domain architecture, Topo IIA-type catalytic spans 41–510 (LPEVRDGLKP…ADGDVSDEDL (470 aa)). Residue Y129 is the O-(5'-phospho-DNA)-tyrosine intermediate of the active site. The GyrA-box signature appears at 537 to 543 (QKRGGKG).

The protein belongs to the type II topoisomerase GyrA/ParC subunit family. As to quaternary structure, heterotetramer, composed of two GyrA and two GyrB chains. In the heterotetramer, GyrA contains the active site tyrosine that forms a transient covalent intermediate with DNA, while GyrB binds cofactors and catalyzes ATP hydrolysis. It depends on Mg(2+) as a cofactor.

It localises to the cytoplasm. The catalysed reaction is ATP-dependent breakage, passage and rejoining of double-stranded DNA.. Its activity is regulated as follows. DNA supercoiling is inhibited by EDTA, novobiocin, coumermycin and ciprofloxacin. Functionally, a type II topoisomerase that negatively supercoils closed circular double-stranded (ds) DNA in an ATP-dependent manner to modulate DNA topology and maintain chromosomes in an underwound state. Also catalyzes the interconversion of other topological isomers of double-stranded DNA rings, including catenanes and knotted rings. Relaxes negatively supercoiled DNA in an ATP-independent manner. A linear reaction intermediate can be trapped in the presence of the antibiotic ciprofloxacin. Negative supercoiling favors strand separation, and DNA replication, transcription, recombination and repair, all of which involve strand separation. Type II topoisomerases break and join 2 DNA strands simultaneously in an ATP-dependent manner. This chain is DNA gyrase subunit A, found in Mycobacterium bovis (strain BCG / Pasteur 1173P2).